The following is a 191-amino-acid chain: UPF0312 protein Sputcn32_2702 (191 aa).

Positions Met1–Ala22 are cleaved as a signal peptide.

Belongs to the UPF0312 family. Type 1 subfamily.

It is found in the periplasm. The sequence is that of UPF0312 protein Sputcn32_2702 from Shewanella putrefaciens (strain CN-32 / ATCC BAA-453).